The chain runs to 197 residues: Phosphoheptose isomerase (197 aa).

The SIS domain maps to 34 to 196; the sequence is MVHCLLGGNK…DRTLFPQDEQ (163 aa). A substrate-binding site is contributed by 49–51; the sequence is NGG. Zn(2+) contacts are provided by His58 and Glu62. Substrate contacts are provided by residues Glu62, 91–92, 117–119, Ser122, and Gln172; these read ND and STS. The Zn(2+) site is built by Gln172 and His180.

The protein belongs to the SIS family. GmhA subfamily. In terms of assembly, homotetramer. Zn(2+) is required as a cofactor.

Its subcellular location is the cytoplasm. It carries out the reaction 2 D-sedoheptulose 7-phosphate = D-glycero-alpha-D-manno-heptose 7-phosphate + D-glycero-beta-D-manno-heptose 7-phosphate. It functions in the pathway carbohydrate biosynthesis; D-glycero-D-manno-heptose 7-phosphate biosynthesis; D-glycero-alpha-D-manno-heptose 7-phosphate and D-glycero-beta-D-manno-heptose 7-phosphate from sedoheptulose 7-phosphate: step 1/1. Its function is as follows. Catalyzes the isomerization of sedoheptulose 7-phosphate in D-glycero-D-manno-heptose 7-phosphate. In Shewanella sediminis (strain HAW-EB3), this protein is Phosphoheptose isomerase.